The following is a 1140-amino-acid chain: Eukaryotic translation initiation factor 3 subunit A (1140 aa).

Positions 319–501 constitute a PCI domain; it reads LQRMAAHVLL…NSIYFGTDLT (183 aa). 2 stretches are compositionally biased toward basic and acidic residues: residues 588–623 and 829–899; these read QNNA…EERE and AAEE…RGGD. Disordered stretches follow at residues 588 to 630 and 829 to 1140; these read QNNA…HQNE and AAEE…VKRR. Serine 908 is modified (phosphoserine). Basic and acidic residues-rich tracts occupy residues 920–976, 990–1051, 1059–1086, and 1109–1130; these read ERND…EPDS, SRDD…EPQR, DAPR…RGDQ, and TREE…KAGD.

The protein belongs to the eIF-3 subunit A family. As to quaternary structure, component of the eukaryotic translation initiation factor 3 (eIF-3) complex. The eIF-3 complex interacts with pix.

The protein resides in the cytoplasm. Functionally, RNA-binding component of the eukaryotic translation initiation factor 3 (eIF-3) complex, which is involved in protein synthesis of a specialized repertoire of mRNAs and, together with other initiation factors, stimulates binding of mRNA and methionyl-tRNAi to the 40S ribosome. The eIF-3 complex specifically targets and initiates translation of a subset of mRNAs involved in cell proliferation. The sequence is that of Eukaryotic translation initiation factor 3 subunit A from Drosophila melanogaster (Fruit fly).